A 248-amino-acid polypeptide reads, in one-letter code: Chitin deacetylase (248 aa).

Residues Met1 to Arg26 form the signal peptide. 2 cysteine pairs are disulfide-bonded: Cys38-Cys237 and Cys148-Cys152. The NodB homology domain maps to Gly42–Val232. The active-site Proton acceptor is the Asp49. Asp49 contacts acetate. Residues Asp50, His104, and His108 each contribute to the Co(2+) site. Position 145 (Tyr145) interacts with acetate. The Proton donor role is filled by His206.

Belongs to the polysaccharide deacetylase family. In terms of assembly, monomer. The cofactor is Co(2+). Post-translationally, N-glycosylated.

Its subcellular location is the secreted. It catalyses the reaction [(1-&gt;4)-N-acetyl-beta-D-glucosaminyl](n) + n H2O = chitosan + n acetate. Functionally, hydrolyzes the N-acetamido groups of N-acetyl-D-glucosamine polymers in chitin to form chitosan and acetate. May play a role in evasion of the host immune response; plant chitinases liberate chitin molecules from the fungal cell wall which act as elicitors of the plant immune response, deacetylation of the liberated chitin neutralizes elicitor activity. This Colletotrichum lindemuthianum (Bean anthracnose fungus) protein is Chitin deacetylase.